The following is a 181-amino-acid chain: ADP-ribosylation factor 1 (181 aa).

The N-myristoyl glycine moiety is linked to residue Gly2. GTP is bound by residues 24–31, 67–71, and 126–129; these read GLDAAGKT, DVGGQ, and NKQD.

Belongs to the small GTPase superfamily. Arf family. Interacts with AGD7 and GDAP1. GDP-locked form interacts with cytosolic tail of p24 proteins. Interacts with AGD5 at trans-Golgi network. Interacts with A.tumefaciens AK6b.

It localises to the golgi apparatus. It is found in the endosome. The protein resides in the trans-Golgi network. The protein localises to the early endosome. It carries out the reaction GTP + H2O = GDP + phosphate + H(+). Activated by AGD7 and AGD10. Its function is as follows. GTP-binding protein involved in protein trafficking; required for the sequence-specific vacuolar sorting route to the lytic vacuole, for the ER-to-Golgi transport and for the Golgi-derived transport to the plasma membrane. Involved in the recruitment of COPI and GDAP1 to membranes. Required for recycling of PIN auxin transporters (e.g. PIN1 and PIN2) in a fungal toxin brefeldin A (BFA)-dependent manner. Involved in various auxin-dependent developmental processes. The protein is ADP-ribosylation factor 1 of Arabidopsis thaliana (Mouse-ear cress).